A 78-amino-acid polypeptide reads, in one-letter code: Putative protein PeaD (78 aa).

Belongs to the phage P protein family.

The protein is Putative protein PeaD (peaD) of Escherichia coli (strain K12).